Here is a 426-residue protein sequence, read N- to C-terminus: Glutamate-1-semialdehyde 2,1-aminomutase (426 aa).

At Lys-265 the chain carries N6-(pyridoxal phosphate)lysine.

The protein belongs to the class-III pyridoxal-phosphate-dependent aminotransferase family. HemL subfamily. In terms of assembly, homodimer. Requires pyridoxal 5'-phosphate as cofactor.

The protein localises to the cytoplasm. It catalyses the reaction (S)-4-amino-5-oxopentanoate = 5-aminolevulinate. The protein operates within porphyrin-containing compound metabolism; protoporphyrin-IX biosynthesis; 5-aminolevulinate from L-glutamyl-tRNA(Glu): step 2/2. The sequence is that of Glutamate-1-semialdehyde 2,1-aminomutase from Escherichia coli (strain SMS-3-5 / SECEC).